The primary structure comprises 775 residues: Endothelin-converting enzyme-like 1 (775 aa).

The Cytoplasmic portion of the chain corresponds to 1–61 (MEAPYSMTAH…LPRWNRREVC (61 aa)). The tract at residues 30-52 (GTSLPPGFPRGSGRSASGSRSGL) is disordered. Residues 32 to 52 (SLPPGFPRGSGRSASGSRSGL) are compositionally biased toward low complexity. A helical; Signal-anchor for type II membrane protein membrane pass occupies residues 62–82 (LLSGLVFAAGLCAILAAMLAL). Residues 83–775 (KYLGPGAAGG…MNPVHKCSVW (693 aa)) lie on the Lumenal side of the membrane. Positions 99–775 (GCPERKAFAR…MNPVHKCSVW (677 aa)) constitute a Peptidase M13 domain. Disulfide bonds link Cys-124/Cys-760, Cys-132/Cys-720, Cys-188/Cys-441, and Cys-649/Cys-772. N-linked (GlcNAc...) asparagine glycosylation is found at Asn-255 and Asn-322. His-612 provides a ligand contact to Zn(2+). Glu-613 is a catalytic residue. His-616 provides a ligand contact to Zn(2+). N-linked (GlcNAc...) asparagine glycosylation is present at Asn-656. Glu-672 serves as a coordination point for Zn(2+). The active-site Proton donor is the Asp-676.

The protein belongs to the peptidase M13 family. Zn(2+) is required as a cofactor.

It localises to the membrane. Its function is as follows. May contribute to the degradation of peptide hormones and be involved in the inactivation of neuronal peptides. The sequence is that of Endothelin-converting enzyme-like 1 (Ecel1) from Mus musculus (Mouse).